The sequence spans 485 residues: MGFHQISVIIVVLALASARAADEFPSHTDTPTDCPEADHGCWCHGSFAQCWRTYEDSRMTEEIGNRITQLELLYQPSEEVVTYIRRISALRELRISEDGMSLDCSCDVIYALDDKQVTLVNQAELTFGNCRERGWPRERMAARPFVHRCHVLRMQDGETRKRRGADDNDGDDVSKRASPRKGDEPAGHKLKDLAPQNTHHLVNIHDADKHPASEFVNFISGHRRSRRSTDDDAAVSDDSERGARKKRYGNQGNYPQAMNPQSRGVNYGQPAQQGYGAQGMGGAFGGGQGMGGAVRGGQGMGGAVGGGQFGAFSPGEAEADNADYDEYSDSLDEGDTTISAAVMDDIKAVLGATKIDLPVDINDPYDLGLLLRHLRHHSNLLANIGDPAVREQVLSAMQEEEEEEEEDAANGVRQNVLNNINANAPGNAGYGGQGGMGAFGGGGGGMGAIGGGGGAMMGQQGMGGVPQRMGGQPQGNAYNQGYRQG.

Positions 1–20 (MGFHQISVIIVVLALASARA) are cleaved as a signal peptide. The propeptide occupies 21–247 (ADEFPSHTDT…DSERGARKKR (227 aa)). 3 disordered regions span residues 157–195 (GETR…DLAP), 219–273 (ISGH…PAQQ), and 305–331 (GGGQ…SDSL). A compositionally biased stretch (basic and acidic residues) spans 172–192 (DVSKRASPRKGDEPAGHKLKD). Positions 250–264 (NQGNYPQAMNPQSRG) are enriched in polar residues. Residues 317–331 (AEADNADYDEYSDSL) show a composition bias toward acidic residues. The segment at 371–379 (LRHLRHHSN) is fucose-binding domain. Positions 459–485 (QQGMGGVPQRMGGQPQGNAYNQGYRQG) are disordered. A compositionally biased stretch (low complexity) spans 465–475 (VPQRMGGQPQG). Polar residues predominate over residues 476–485 (NAYNQGYRQG).

It belongs to the bindin family.

The protein localises to the cytoplasmic vesicle. It localises to the secretory vesicle. It is found in the acrosome lumen. Species-specific sea urchin sperm protein required for adhesion of sperm to the egg surface during fertilization. Bindin coats the acrosomal process after it is externalized by the acrosome reaction. It binds to sulfated, fucose-containing polysaccharides on the vitelline layer receptor proteoglycans which cover the egg plasma membrane. The polypeptide is Bindin (Mesocentrotus franciscanus (Giant red sea urchin)).